The primary structure comprises 335 residues: Thioredoxin reductase (335 aa).

FAD contacts are provided by residues 22–25 (SGPA), 44–51 (EGTSFGGA), asparagine 60, and valine 93. A disulfide bond links cysteine 145 and cysteine 148. The NADP(+) site is built by serine 166, histidine 185, arginine 191, isoleucine 248, and tyrosine 268. Residues aspartate 288 and 295 to 298 (RQAV) each bind FAD. Residue arginine 295 participates in NADP(+) binding.

Belongs to the class-II pyridine nucleotide-disulfide oxidoreductase family. As to quaternary structure, homodimer. The cofactor is FAD.

It is found in the cytoplasm. It catalyses the reaction [thioredoxin]-dithiol + NADP(+) = [thioredoxin]-disulfide + NADPH + H(+). This Mycobacterium tuberculosis (strain CDC 1551 / Oshkosh) protein is Thioredoxin reductase.